The chain runs to 88 residues: Small ribosomal subunit protein uS15c (88 aa).

This sequence belongs to the universal ribosomal protein uS15 family. Part of the 30S ribosomal subunit.

The protein resides in the plastid. Its subcellular location is the chloroplast. In Capsella bursa-pastoris (Shepherd's purse), this protein is Small ribosomal subunit protein uS15c (rps15).